The following is a 151-amino-acid chain: Probable cGMP 3',5'-cyclic phosphodiesterase subunit delta (151 aa).

Belongs to the PDE6D/unc-119 family. Interacts with Pde6.

Its subcellular location is the nucleus. It localises to the cytoplasm. This is Probable cGMP 3',5'-cyclic phosphodiesterase subunit delta from Culex quinquefasciatus (Southern house mosquito).